Consider the following 587-residue polypeptide: Ankyrin repeat and SOCS box protein 14 (587 aa).

ANK repeat units lie at residues 82-112 (IGWI…SLWE), 117-146 (NGET…NPNA), 150-179 (EGNS…DVNL), 183-212 (NERT…HPDP), 216-245 (YGFT…IFCL), 248-277 (DSSS…DANI), 281-310 (SGHL…LAAI), 313-342 (SGIS…DVNF), 355-384 (HRKS…LPNQ), 385-414 (DPVN…NVNY), and 416-449 (CRVN…DTER). Residues 521–576 (WSEIHFILTNPRSLKHLCRLKIRKCMGRLHLRCPVFMSFLPLPNRLKAYVLYKEYD) enclose the SOCS box domain.

Belongs to the ankyrin SOCS box (ASB) family. Interacts with MAPRE2; this interaction promotes MAPRE2 degradation.

The protein operates within protein modification; protein ubiquitination. Functionally, may be a substrate-recognition component of a SCF-like ECS (Elongin-Cullin-SOCS-box protein) E3 ubiquitin-protein ligase complex which mediates the ubiquitination and subsequent proteasomal degradation of target proteins. Plays a role in the inhibition of cardiomyocyte nuclear proliferation by mediating the ubiquitination and degradation of MAPRE2. This is Ankyrin repeat and SOCS box protein 14 (ASB14) from Homo sapiens (Human).